The following is a 291-amino-acid chain: tRNA U34 carboxymethyltransferase (291 aa).

Carboxy-S-adenosyl-L-methionine contacts are provided by residues Lys61, Trp75, Lys80, Gly100, 122 to 124 (DPS), Tyr169, and Arg284.

The protein belongs to the class I-like SAM-binding methyltransferase superfamily. CmoB family. Homotetramer.

The enzyme catalyses carboxy-S-adenosyl-L-methionine + 5-hydroxyuridine(34) in tRNA = 5-carboxymethoxyuridine(34) in tRNA + S-adenosyl-L-homocysteine + H(+). Catalyzes carboxymethyl transfer from carboxy-S-adenosyl-L-methionine (Cx-SAM) to 5-hydroxyuridine (ho5U) to form 5-carboxymethoxyuridine (cmo5U) at position 34 in tRNAs. This Campylobacter lari (strain RM2100 / D67 / ATCC BAA-1060) protein is tRNA U34 carboxymethyltransferase.